The primary structure comprises 289 residues: Acetyl-coenzyme A carboxylase carboxyl transferase subunit beta (289 aa).

One can recognise a CoA carboxyltransferase N-terminal domain in the interval 28–289; it reads VMTKCPKCKK…QGEGMAVWQN (262 aa). Cysteine 32, cysteine 35, cysteine 51, and cysteine 54 together coordinate Zn(2+). Residues 32–54 form a C4-type zinc finger; the sequence is CPKCKKIMYTKELLKNLKVCVNC.

The protein belongs to the AccD/PCCB family. As to quaternary structure, acetyl-CoA carboxylase is a heterohexamer composed of biotin carboxyl carrier protein (AccB), biotin carboxylase (AccC) and two subunits each of ACCase subunit alpha (AccA) and ACCase subunit beta (AccD). Requires Zn(2+) as cofactor.

It is found in the cytoplasm. The enzyme catalyses N(6)-carboxybiotinyl-L-lysyl-[protein] + acetyl-CoA = N(6)-biotinyl-L-lysyl-[protein] + malonyl-CoA. It participates in lipid metabolism; malonyl-CoA biosynthesis; malonyl-CoA from acetyl-CoA: step 1/1. Its function is as follows. Component of the acetyl coenzyme A carboxylase (ACC) complex. Biotin carboxylase (BC) catalyzes the carboxylation of biotin on its carrier protein (BCCP) and then the CO(2) group is transferred by the transcarboxylase to acetyl-CoA to form malonyl-CoA. The polypeptide is Acetyl-coenzyme A carboxylase carboxyl transferase subunit beta (Bacillus cytotoxicus (strain DSM 22905 / CIP 110041 / 391-98 / NVH 391-98)).